Here is a 308-residue protein sequence, read N- to C-terminus: Putative ankyrin repeat protein R835 (308 aa).

ANK repeat units lie at residues 100–129 (DINE…NIDL), 152–181 (PMNK…YVDF), 190–217 (SEYT…GANY), 218–247 (KSSY…DLEK), 249–277 (GLRS…EIDY), and 279–305 (YYIY…SKQI).

The sequence is that of Putative ankyrin repeat protein R835 from Acanthamoeba polyphaga (Amoeba).